The following is a 131-amino-acid chain: Large ribosomal subunit protein bL19 (131 aa).

This sequence belongs to the bacterial ribosomal protein bL19 family.

Functionally, this protein is located at the 30S-50S ribosomal subunit interface and may play a role in the structure and function of the aminoacyl-tRNA binding site. This is Large ribosomal subunit protein bL19 from Synechococcus sp. (strain CC9902).